Consider the following 251-residue polypeptide: Hydroxyacylglutathione hydrolase (251 aa).

Residues His-53, His-55, Asp-57, His-58, His-110, Asp-127, and His-165 each coordinate Zn(2+).

Belongs to the metallo-beta-lactamase superfamily. Glyoxalase II family. In terms of assembly, monomer. It depends on Zn(2+) as a cofactor.

It carries out the reaction an S-(2-hydroxyacyl)glutathione + H2O = a 2-hydroxy carboxylate + glutathione + H(+). Its pathway is secondary metabolite metabolism; methylglyoxal degradation; (R)-lactate from methylglyoxal: step 2/2. In terms of biological role, thiolesterase that catalyzes the hydrolysis of S-D-lactoyl-glutathione to form glutathione and D-lactic acid. In Salmonella paratyphi A (strain ATCC 9150 / SARB42), this protein is Hydroxyacylglutathione hydrolase.